Here is a 333-residue protein sequence, read N- to C-terminus: MTVRIGINGFGRIGRNVFRAAAARSSELEIVAVNDLGDVPTMAHLLAYDSILGRFPEEVTAEPGAIRVGDRTIKVLAERDPGALPWGDLGVDIVIESTGIFTDAAKARSHVDGGAKKVIIAAPASGEDFTVVLGVNDGDYDPERHTIISNASCTTNCLGVLAKVLHDAVGIDSGMMTTVHAYTQDQNLQDAPHKDLRRARAAALNIVPTSSGAAKAIGLVLPELAGRLDAFALRVPVPTGSVTDLTVTTRRGTSVEEVKEAYAAAASGPYKGLLSYVDAPLVSTDIVGDPASLFDAGLTRVCGPQVKVVGWYDNEWGYSNRLIDLATLIGSSL.

Residues 12-13, Asp-35, and Arg-79 each bind NAD(+); that span reads RI. D-glyceraldehyde 3-phosphate contacts are provided by residues 152 to 154, Thr-183, Arg-198, 211 to 212, and Arg-234; these read SCT and SG. The active-site Nucleophile is the Cys-153. Asn-314 is an NAD(+) binding site.

Belongs to the glyceraldehyde-3-phosphate dehydrogenase family. As to quaternary structure, homotetramer.

The protein localises to the cytoplasm. It catalyses the reaction D-glyceraldehyde 3-phosphate + phosphate + NAD(+) = (2R)-3-phospho-glyceroyl phosphate + NADH + H(+). It functions in the pathway carbohydrate degradation; glycolysis; pyruvate from D-glyceraldehyde 3-phosphate: step 1/5. With respect to regulation, resistant to pentalenolactone (PL). Functionally, catalyzes the oxidative phosphorylation of glyceraldehyde 3-phosphate (G3P) to 1,3-bisphosphoglycerate (BPG) using the cofactor NAD. The first reaction step involves the formation of a hemiacetal intermediate between G3P and a cysteine residue, and this hemiacetal intermediate is then oxidized to a thioester, with concomitant reduction of NAD to NADH. The reduced NADH is then exchanged with the second NAD, and the thioester is attacked by a nucleophilic inorganic phosphate to produce BPG. The chain is Glyceraldehyde-3-phosphate dehydrogenase 1 (gap1) from Streptomyces arenae.